We begin with the raw amino-acid sequence, 361 residues long: MKPSLLHRLEGVSERFQELAGLLSEPEVISDNARFRRLSMEYSQLEPVVEAFRRYEGAQADLTAAREMQKDPDPDLRAMAEDEAATAAERLETLELELQKLLIPKDPHDHSNLFLEIRAGTGGDEAAIFAGDLFRMYSRYAENQGWQVEILSQSEGEHGGYKEVIARLIGAGAYSRLKFESGAHRVQRVPATESQGRIHTSAATVAVMPEPDEVEAPEINPADLRVDTYRASGAGGQHVNKTDSAIRLTHLPTGIVVECQDERSQHKNRARAMSLLAAKLFEAEQARQQAEQSATRKSLVGSGDRSERIRTYNFPQGRITDHRINLTLYKLDAVMAGDLDPVIEPLINEHQAEKLAALADE.

Position 237 is an N5-methylglutamine (Q237).

The protein belongs to the prokaryotic/mitochondrial release factor family. Post-translationally, methylated by PrmC. Methylation increases the termination efficiency of RF1.

The protein localises to the cytoplasm. In terms of biological role, peptide chain release factor 1 directs the termination of translation in response to the peptide chain termination codons UAG and UAA. The chain is Peptide chain release factor 1 from Thioalkalivibrio sulfidiphilus (strain HL-EbGR7).